A 198-amino-acid chain; its full sequence is Photosystem I assembly protein Ycf4 (198 aa).

Residues 1–20 are disordered; the sequence is MTASTTINKGDSPNGDSSAS. Helical transmembrane passes span 38-58 and 78-98; these read WASIVTLGASGFLLAGISSYL and LVMGLYGTAGLLLASYLWLAI.

The protein belongs to the Ycf4 family.

Its subcellular location is the cellular thylakoid membrane. Seems to be required for the assembly of the photosystem I complex. This is Photosystem I assembly protein Ycf4 from Trichormus variabilis (strain ATCC 29413 / PCC 7937) (Anabaena variabilis).